The chain runs to 793 residues: Protein translocase subunit SecA 2 (793 aa).

ATP contacts are provided by residues Gln-77, 95–99, and Asp-493; that span reads GEGKT.

Belongs to the SecA family. In terms of assembly, monomer and homodimer (Potential). Part of the accessory SecA2/SecY2 protein translocation apparatus required to export cell wall protein GspB.

It localises to the cell membrane. The protein localises to the cytoplasm. It carries out the reaction ATP + H2O + cellular proteinSide 1 = ADP + phosphate + cellular proteinSide 2.. Its function is as follows. Part of the accessory SecA2/SecY2 system specifically required to export GspB, a serine-rich repeat cell wall protein encoded upstream in the same operon. The polypeptide is Protein translocase subunit SecA 2 (Streptococcus gordonii).